We begin with the raw amino-acid sequence, 169 residues long: S-ribosylhomocysteine lyase (169 aa).

The Fe cation site is built by His54, His58, and Cys128.

The protein belongs to the LuxS family. Homodimer. Fe cation is required as a cofactor.

It carries out the reaction S-(5-deoxy-D-ribos-5-yl)-L-homocysteine = (S)-4,5-dihydroxypentane-2,3-dione + L-homocysteine. Its function is as follows. Involved in the synthesis of autoinducer 2 (AI-2) which is secreted by bacteria and is used to communicate both the cell density and the metabolic potential of the environment. The regulation of gene expression in response to changes in cell density is called quorum sensing. Catalyzes the transformation of S-ribosylhomocysteine (RHC) to homocysteine (HC) and 4,5-dihydroxy-2,3-pentadione (DPD). In Shewanella halifaxensis (strain HAW-EB4), this protein is S-ribosylhomocysteine lyase.